A 396-amino-acid polypeptide reads, in one-letter code: Elongation factor Tu (396 aa).

One can recognise a tr-type G domain in the interval 10-206 (KPHVNVGTIG…ALDTYIPEPE (197 aa)). A G1 region spans residues 19–26 (GHVDHGKT). 19–26 (GHVDHGKT) serves as a coordination point for GTP. Threonine 26 is a binding site for Mg(2+). The interval 60–64 (GITIN) is G2. Residues 81–84 (DCPG) are G3. GTP contacts are provided by residues 81-85 (DCPGH) and 136-139 (NKCD). Residues 136 to 139 (NKCD) form a G4 region. Positions 174–176 (SAL) are G5.

The protein belongs to the TRAFAC class translation factor GTPase superfamily. Classic translation factor GTPase family. EF-Tu/EF-1A subfamily. Monomer.

It localises to the cytoplasm. The enzyme catalyses GTP + H2O = GDP + phosphate + H(+). In terms of biological role, GTP hydrolase that promotes the GTP-dependent binding of aminoacyl-tRNA to the A-site of ribosomes during protein biosynthesis. The polypeptide is Elongation factor Tu (Acinetobacter baylyi (strain ATCC 33305 / BD413 / ADP1)).